Here is a 589-residue protein sequence, read N- to C-terminus: Phenylalanine--tRNA ligase beta subunit (589 aa).

In terms of domain architecture, B5 spans 290–368; sequence LNPTCFKADI…IAYGYDNLKH (79 aa). Mg(2+)-binding residues include D346, D352, E355, and D356.

This sequence belongs to the phenylalanyl-tRNA synthetase beta subunit family. Type 2 subfamily. In terms of assembly, tetramer of two alpha and two beta subunits. Mg(2+) is required as a cofactor.

Its subcellular location is the cytoplasm. The protein localises to the nucleus. The enzyme catalyses tRNA(Phe) + L-phenylalanine + ATP = L-phenylalanyl-tRNA(Phe) + AMP + diphosphate + H(+). The chain is Phenylalanine--tRNA ligase beta subunit (frs1) from Schizosaccharomyces pombe (strain 972 / ATCC 24843) (Fission yeast).